Consider the following 679-residue polypeptide: Protein hook (679 aa).

The Calponin-homology (CH) domain occupies 6–123 (NEMYYSLLEW…RLLQLVLGCA (118 aa)). 2 coiled-coil regions span residues 135 to 437 (EIMC…LKCG) and 480 to 574 (QTAL…QEIL).

The protein belongs to the hook family. As to quaternary structure, homodimer. Interacts with microtubules via its N-terminus.

The protein localises to the cytoplasm. Its subcellular location is the cytoskeleton. It is found in the endosome. It localises to the synapse. Functionally, involved in endocytic trafficking by stabilizing organelles of the endocytic pathway. Probably acts as a cytoskeletal linker protein required to tether endosome vesicles to the cytoskeleton. Involved in modulation of endocytosis at stages required for down-regulation of membrane proteins that control synapse size. Not involved in synaptic vesicle recycling. Required in R7 cells for boss endocytosis into multivesicular bodies (MVBs). Has a role in regulating adult longevity. This Drosophila yakuba (Fruit fly) protein is Protein hook.